The primary structure comprises 200 residues: 3-isopropylmalate dehydratase small subunit (200 aa).

Belongs to the LeuD family. LeuD type 1 subfamily. In terms of assembly, heterodimer of LeuC and LeuD.

The enzyme catalyses (2R,3S)-3-isopropylmalate = (2S)-2-isopropylmalate. The protein operates within amino-acid biosynthesis; L-leucine biosynthesis; L-leucine from 3-methyl-2-oxobutanoate: step 2/4. In terms of biological role, catalyzes the isomerization between 2-isopropylmalate and 3-isopropylmalate, via the formation of 2-isopropylmaleate. This is 3-isopropylmalate dehydratase small subunit from Proteus mirabilis (strain HI4320).